The following is a 411-amino-acid chain: LL-diaminopimelate aminotransferase (411 aa).

Substrate contacts are provided by Y15 and G42. Residues Y72, 108-109 (SK), Y132, N187, Y218, and 246-248 (SFS) contribute to the pyridoxal 5'-phosphate site. Residues K109, Y132, and N187 each coordinate substrate. K249 bears the N6-(pyridoxal phosphate)lysine mark. Residues R257 and N292 each coordinate pyridoxal 5'-phosphate. Residues N292 and R388 each coordinate substrate.

Belongs to the class-I pyridoxal-phosphate-dependent aminotransferase family. LL-diaminopimelate aminotransferase subfamily. As to quaternary structure, homodimer. Requires pyridoxal 5'-phosphate as cofactor.

The enzyme catalyses (2S,6S)-2,6-diaminopimelate + 2-oxoglutarate = (S)-2,3,4,5-tetrahydrodipicolinate + L-glutamate + H2O + H(+). The protein operates within amino-acid biosynthesis; L-lysine biosynthesis via DAP pathway; LL-2,6-diaminopimelate from (S)-tetrahydrodipicolinate (aminotransferase route): step 1/1. Functionally, involved in the synthesis of meso-diaminopimelate (m-DAP or DL-DAP), required for both lysine and peptidoglycan biosynthesis. Catalyzes the direct conversion of tetrahydrodipicolinate to LL-diaminopimelate. This is LL-diaminopimelate aminotransferase from Synechococcus sp. (strain JA-3-3Ab) (Cyanobacteria bacterium Yellowstone A-Prime).